Consider the following 86-residue polypeptide: Small ribosomal subunit protein uS17 (86 aa).

Belongs to the universal ribosomal protein uS17 family. In terms of assembly, part of the 30S ribosomal subunit.

In terms of biological role, one of the primary rRNA binding proteins, it binds specifically to the 5'-end of 16S ribosomal RNA. In Marinomonas sp. (strain MWYL1), this protein is Small ribosomal subunit protein uS17.